The chain runs to 417 residues: Serine hydroxymethyltransferase (417 aa).

(6S)-5,6,7,8-tetrahydrofolate-binding positions include Leu-121 and 125–127 (GHL). Lys-229 is modified (N6-(pyridoxal phosphate)lysine). Position 355–357 (355–357 (SPF)) interacts with (6S)-5,6,7,8-tetrahydrofolate.

It belongs to the SHMT family. In terms of assembly, homodimer. It depends on pyridoxal 5'-phosphate as a cofactor.

It localises to the cytoplasm. The catalysed reaction is (6R)-5,10-methylene-5,6,7,8-tetrahydrofolate + glycine + H2O = (6S)-5,6,7,8-tetrahydrofolate + L-serine. The protein operates within one-carbon metabolism; tetrahydrofolate interconversion. Its pathway is amino-acid biosynthesis; glycine biosynthesis; glycine from L-serine: step 1/1. Catalyzes the reversible interconversion of serine and glycine with tetrahydrofolate (THF) serving as the one-carbon carrier. This reaction serves as the major source of one-carbon groups required for the biosynthesis of purines, thymidylate, methionine, and other important biomolecules. Also exhibits THF-independent aldolase activity toward beta-hydroxyamino acids, producing glycine and aldehydes, via a retro-aldol mechanism. The sequence is that of Serine hydroxymethyltransferase from Enterobacter sp. (strain 638).